A 58-amino-acid chain; its full sequence is Large ribosomal subunit protein bL32 (58 aa).

The protein belongs to the bacterial ribosomal protein bL32 family.

The chain is Large ribosomal subunit protein bL32 from Synechococcus sp. (strain WH7803).